The chain runs to 394 residues: Chorismate synthase (394 aa).

Arginine 40 and arginine 46 together coordinate NADP(+). FMN-binding positions include 135 to 137 and 255 to 256; these read RAS and QA. The tract at residues 270 to 291 is disordered; it reads RRRGSGAHDEIEPAGAGSRRVR. FMN is bound by residues glycine 302, 317–321, and arginine 343; that span reads KPISS.

This sequence belongs to the chorismate synthase family. As to quaternary structure, homotetramer. FMNH2 is required as a cofactor.

The enzyme catalyses 5-O-(1-carboxyvinyl)-3-phosphoshikimate = chorismate + phosphate. Its pathway is metabolic intermediate biosynthesis; chorismate biosynthesis; chorismate from D-erythrose 4-phosphate and phosphoenolpyruvate: step 7/7. Catalyzes the anti-1,4-elimination of the C-3 phosphate and the C-6 proR hydrogen from 5-enolpyruvylshikimate-3-phosphate (EPSP) to yield chorismate, which is the branch point compound that serves as the starting substrate for the three terminal pathways of aromatic amino acid biosynthesis. This reaction introduces a second double bond into the aromatic ring system. The polypeptide is Chorismate synthase (Frankia casuarinae (strain DSM 45818 / CECT 9043 / HFP020203 / CcI3)).